The chain runs to 110 residues: Large ribosomal subunit protein uL22 (110 aa).

It belongs to the universal ribosomal protein uL22 family. In terms of assembly, part of the 50S ribosomal subunit.

Functionally, this protein binds specifically to 23S rRNA; its binding is stimulated by other ribosomal proteins, e.g. L4, L17, and L20. It is important during the early stages of 50S assembly. It makes multiple contacts with different domains of the 23S rRNA in the assembled 50S subunit and ribosome. In terms of biological role, the globular domain of the protein is located near the polypeptide exit tunnel on the outside of the subunit, while an extended beta-hairpin is found that lines the wall of the exit tunnel in the center of the 70S ribosome. The protein is Large ribosomal subunit protein uL22 of Haemophilus ducreyi (strain 35000HP / ATCC 700724).